The chain runs to 630 residues: MTQTYNADAIEVLTGLEPVRRRPGMYTDTTRPNHLGQEVIDNSVDEALAGHAKRVDVILHADQSLEVIDDGRGMPVDIHPEEGVPAVELILCRLHAGGKFSNKNYQFSGGLHGVGISVVNALSKRVEVTVRRDGQVYNIAFENGEKVQDLQVVGTCGKRNTGTSVHFWPDESFFDSPRFSVSRLMHVLKAKAVLCPGVEITFKDEVNNSEQRWCYQDGLNDYLGEAVNGLPTLPEKPFIGNFNGETEAVDWALLWLPEGGELLTESYVNLIPTMQGGTHVNGLRQGLLDAMREFCEYRNILPRGVKLSAEDIWDRCAYVLSVKMQDPQFAGQTKERLSSRQCAAFVSGVVKDAFSLWLNQNVQAAEQLAEMAIASAQRRLRAAKKVVRKKLTSGPALPGKLADCTAQDLNRTELFLVEGDSAGGSAKQARDREYQAIMPLKGKILNTWEVSSDEVLASQEVHDISVAIGIDPDSDDLSQLRYGKICILADADSDGLHIATLLCALFVRHFRALVKNGHVYVALPPLYRIDLGKEVYYALTEEEKAGVLEQLKRKKGKPNVQRFKGLGEMNPMQLRETTLDPNTRRLVQLTISDEDDQRTNAMMDMLLAKKRSEDRRNWLQEKGDLADLDV.

Residues Tyr-5, Asn-42, Asp-69, 110–116, and Lys-334 contribute to the ATP site; that span reads GLHGVGI. The Toprim domain maps to 412–525; sequence TELFLVEGDS…NGHVYVALPP (114 aa). Residues Glu-418, Asp-490, and Asp-492 each contribute to the Mg(2+) site.

The protein belongs to the type II topoisomerase family. ParE type 1 subfamily. In terms of assembly, heterotetramer composed of ParC and ParE. The cofactor is Mg(2+). It depends on Mn(2+) as a cofactor. Requires Ca(2+) as cofactor.

It carries out the reaction ATP-dependent breakage, passage and rejoining of double-stranded DNA.. Topoisomerase IV is essential for chromosome segregation. It relaxes supercoiled DNA. Performs the decatenation events required during the replication of a circular DNA molecule. The chain is DNA topoisomerase 4 subunit B from Salmonella typhi.